A 490-amino-acid polypeptide reads, in one-letter code: Betaine aldehyde dehydrogenase (490 aa).

Asp-93 provides a ligand contact to K(+). Residue 150–152 coordinates NAD(+); that stretch reads GAW. Lys-162 serves as the catalytic Charge relay system. 176 to 179 serves as a coordination point for NAD(+); sequence KPSE. Residue Val-180 coordinates K(+). 230–233 is a binding site for NAD(+); sequence GVKT. Leu-246 contacts K(+). The active-site Proton acceptor is the Glu-252. Positions 254, 286, and 387 each coordinate NAD(+). Cys-286 serves as the catalytic Nucleophile. Cys-286 bears the Cysteine sulfenic acid (-SOH) mark. K(+)-binding residues include Lys-457 and Gly-460. The active-site Charge relay system is the Glu-464.

The protein belongs to the aldehyde dehydrogenase family. In terms of assembly, dimer of dimers. K(+) serves as cofactor.

It carries out the reaction betaine aldehyde + NAD(+) + H2O = glycine betaine + NADH + 2 H(+). The protein operates within amine and polyamine biosynthesis; betaine biosynthesis via choline pathway; betaine from betaine aldehyde: step 1/1. Involved in the biosynthesis of the osmoprotectant glycine betaine. Catalyzes the irreversible oxidation of betaine aldehyde to the corresponding acid. This chain is Betaine aldehyde dehydrogenase, found in Serratia proteamaculans (strain 568).